A 168-amino-acid polypeptide reads, in one-letter code: Small ribosomal subunit protein uS9 (168 aa).

Positions 1-29 are enriched in low complexity; the sequence is MAQNEELTAEAVEAEETLTSYTSESTSAE. The tract at residues 1-36 is disordered; sequence MAQNEELTAEAVEAEETLTSYTSESTSAEDAPKKER.

This sequence belongs to the universal ribosomal protein uS9 family.

This chain is Small ribosomal subunit protein uS9, found in Paenarthrobacter aurescens (strain TC1).